A 226-amino-acid chain; its full sequence is Triosephosphate isomerase (226 aa).

Position 10 to 12 (10 to 12 (NFK)) interacts with substrate. The active-site Electrophile is the H96. E144 acts as the Proton acceptor in catalysis. Residues I149, G184, and 205–206 (AS) contribute to the substrate site.

Belongs to the triosephosphate isomerase family. In terms of assembly, homotetramer; dimer of dimers.

It is found in the cytoplasm. It catalyses the reaction D-glyceraldehyde 3-phosphate = dihydroxyacetone phosphate. The protein operates within carbohydrate biosynthesis; gluconeogenesis. It functions in the pathway carbohydrate degradation; glycolysis; D-glyceraldehyde 3-phosphate from glycerone phosphate: step 1/1. Its function is as follows. Involved in the gluconeogenesis. Catalyzes stereospecifically the conversion of dihydroxyacetone phosphate (DHAP) to D-glyceraldehyde-3-phosphate (G3P). The polypeptide is Triosephosphate isomerase (Methanopyrus kandleri (strain AV19 / DSM 6324 / JCM 9639 / NBRC 100938)).